We begin with the raw amino-acid sequence, 345 residues long: UDP-N-acetylenolpyruvoylglucosamine reductase (345 aa).

In terms of domain architecture, FAD-binding PCMH-type spans 16–185 (VNAFAKSVVT…VSVGLRLCKK (170 aa)). Arginine 162 is a catalytic residue. Serine 231 functions as the Proton donor in the catalytic mechanism. Residue glutamate 328 is part of the active site.

The protein belongs to the MurB family. The cofactor is FAD.

Its subcellular location is the cytoplasm. The enzyme catalyses UDP-N-acetyl-alpha-D-muramate + NADP(+) = UDP-N-acetyl-3-O-(1-carboxyvinyl)-alpha-D-glucosamine + NADPH + H(+). It participates in cell wall biogenesis; peptidoglycan biosynthesis. Its function is as follows. Cell wall formation. The sequence is that of UDP-N-acetylenolpyruvoylglucosamine reductase from Blochmanniella pennsylvanica (strain BPEN).